The following is a 388-amino-acid chain: Endoglucanase 3 (388 aa).

Residues 1–16 form the signal peptide; that stretch reads MKHSVLAGLFATGALA. A CBM1 domain is found at 17–52; the sequence is QGGAWQQCGGVGFSGSTSCVSGYTCVYLNDWYSQCQ. 2 disulfide bridges follow: cysteine 24–cysteine 41 and cysteine 35–cysteine 51. Residues 53 to 91 are linker; the sequence is PQPTTLRTTTTPGATSTTRSAPAATSTTPAKGKFKWFGI. Residues 56–81 are disordered; the sequence is TTLRTTTTPGATSTTRSAPAATSTTP. Asparagine 92 and asparagine 155 each carry an N-linked (GlcNAc...) asparagine glycan. The catalytic stretch occupies residues 92 to 388; the sequence is NQSCAEFGKG…YNSLLKKYVP (297 aa). The active-site Proton donor is glutamate 215. The N-linked (GlcNAc...) asparagine glycan is linked to asparagine 259. The active-site Nucleophile is the glutamate 322.

The protein belongs to the glycosyl hydrolase 5 (cellulase A) family.

It carries out the reaction Endohydrolysis of (1-&gt;4)-beta-D-glucosidic linkages in cellulose, lichenin and cereal beta-D-glucans.. In Humicola insolens (Soft-rot fungus), this protein is Endoglucanase 3 (CMC3).